Consider the following 153-residue polypeptide: 3-hydroxyacyl-[acyl-carrier-protein] dehydratase FabZ (153 aa).

His-57 is an active-site residue.

Belongs to the thioester dehydratase family. FabZ subfamily.

It localises to the cytoplasm. It carries out the reaction a (3R)-hydroxyacyl-[ACP] = a (2E)-enoyl-[ACP] + H2O. Functionally, involved in unsaturated fatty acids biosynthesis. Catalyzes the dehydration of short chain beta-hydroxyacyl-ACPs and long chain saturated and unsaturated beta-hydroxyacyl-ACPs. This Vibrio cholerae serotype O1 (strain ATCC 39315 / El Tor Inaba N16961) protein is 3-hydroxyacyl-[acyl-carrier-protein] dehydratase FabZ.